We begin with the raw amino-acid sequence, 1343 residues long: DNA-directed RNA polymerase subunit beta (1343 aa).

The protein belongs to the RNA polymerase beta chain family. In terms of assembly, the RNAP catalytic core consists of 2 alpha, 1 beta, 1 beta' and 1 omega subunit. When a sigma factor is associated with the core the holoenzyme is formed, which can initiate transcription.

It carries out the reaction RNA(n) + a ribonucleoside 5'-triphosphate = RNA(n+1) + diphosphate. In terms of biological role, DNA-dependent RNA polymerase catalyzes the transcription of DNA into RNA using the four ribonucleoside triphosphates as substrates. The sequence is that of DNA-directed RNA polymerase subunit beta from Shewanella woodyi (strain ATCC 51908 / MS32).